The following is a 527-amino-acid chain: Type II methyltransferase M.XamI (527 aa).

Belongs to the N(4)/N(6)-methyltransferase family.

The enzyme catalyses a 2'-deoxyadenosine in DNA + S-adenosyl-L-methionine = an N(6)-methyl-2'-deoxyadenosine in DNA + S-adenosyl-L-homocysteine + H(+). In terms of biological role, a gamma subtype methylase that recognizes the double-stranded sequence 5'-GTCGAC-3', possibly methylates A-5 on both strands, and protects the DNA from cleavage by the XamI endonuclease. The chain is Type II methyltransferase M.XamI from Xanthomonas campestris pv. amaranthicola.